The following is a 354-amino-acid chain: ATPase GET3 (354 aa).

26–33 (KGGVGKTT) contacts ATP. Residue D57 is part of the active site. Positions 245 and 272 each coordinate ATP. Zn(2+) contacts are provided by C285 and C288.

Belongs to the arsA ATPase family. As to quaternary structure, homodimer. Component of the Golgi to ER traffic (GET) complex, which is composed of GET1, GET2 and GET3. Within the complex, GET1 and GET2 form a heterotetramer which is stabilized by phosphatidylinositol binding and which binds to the GET3 homodimer. Interacts with the chloride channel protein GEF1.

The protein resides in the cytoplasm. It localises to the endoplasmic reticulum. The protein localises to the golgi apparatus. In terms of biological role, ATPase required for the post-translational delivery of tail-anchored (TA) proteins to the endoplasmic reticulum. Recognizes and selectively binds the transmembrane domain of TA proteins in the cytosol. This complex then targets to the endoplasmic reticulum by membrane-bound receptors GET1 and GET2, where the tail-anchored protein is released for insertion. This process is regulated by ATP binding and hydrolysis. ATP binding drives the homodimer towards the closed dimer state, facilitating recognition of newly synthesized TA membrane proteins. ATP hydrolysis is required for insertion. Subsequently, the homodimer reverts towards the open dimer state, lowering its affinity for the GET1-GET2 receptor, and returning it to the cytosol to initiate a new round of targeting. Cooperates with the HDEL receptor ERD2 to mediate the ATP-dependent retrieval of resident ER proteins that contain a C-terminal H-D-E-L retention signal from the Golgi to the ER. Involved in low-level resistance to the oxyanions arsenite and arsenate, and in heat tolerance. The sequence is that of ATPase GET3 from Saccharomyces cerevisiae (strain RM11-1a) (Baker's yeast).